The sequence spans 210 residues: Ribonuclease HII (210 aa).

Residues 18 to 208 (YPVAGIDEAG…VNDIISQTKL (191 aa)) form the RNase H type-2 domain. A divalent metal cation contacts are provided by aspartate 24, glutamate 25, and aspartate 116.

Belongs to the RNase HII family. It depends on Mn(2+) as a cofactor. Requires Mg(2+) as cofactor.

It localises to the cytoplasm. It carries out the reaction Endonucleolytic cleavage to 5'-phosphomonoester.. Functionally, endonuclease that specifically degrades the RNA of RNA-DNA hybrids. This is Ribonuclease HII from Endomicrobium trichonymphae.